Here is a 364-residue protein sequence, read N- to C-terminus: Homeobox protein KNOX3 (364 aa).

Positions 13–49 (TAHGQHHSQLPWGSSPLSAVISPPPQQQQQHQQQSAG) are disordered. The span at 19-29 (HSQLPWGSSPL) shows a compositional bias: polar residues. In terms of domain architecture, ELK spans 246-266 (ELKHHLLKKYSGYLSSLKQEL). Residues 267–330 (SKKKKKGKLP…NQRKRHWKPT (64 aa)) constitute a DNA-binding region (homeobox; TALE-type).

The protein belongs to the TALE/KNOX homeobox family. In terms of assembly, binds DNA as a monomer. The unit of inflorescence is the spikelet, which bears a fertile tract, the lemma, and the floret consisting of palea, two lodicules, three stamens and the pistil. The lemma is completed by the awn, an appendage homologous to the laminae of normal leaves. Expressed in the inflorescences and lemmas and at lower levels, in palea and vascular bundles.

Its subcellular location is the nucleus. Functionally, may play a role in meristem formation and/or maintenance. Overexpression causes the hooded phenotype characterized by the appearance of an extra flower of inverse polarity on the lemma. Binds to the DNA sequence 5'-TGAC-3'. In Hordeum vulgare (Barley), this protein is Homeobox protein KNOX3 (KNOX3).